Here is an 878-residue protein sequence, read N- to C-terminus: Bifunctional heparan sulfate N-deacetylase/N-sulfotransferase 1 (878 aa).

Topologically, residues 1–17 (MSLSLKTRRFGRPVRPQ) are cytoplasmic. The interval 1–169 (MSLSLKTRRF…VEYGVGIIGF (169 aa)) is sufficient for localization to Golgi membrane. A helical; Signal-anchor for type II membrane protein membrane pass occupies residues 18 to 38 (LVLLLLFALCLLSVFISAYYL). Residues 39–878 (YGWKRGLEPS…WLREELQNTR (840 aa)) lie on the Lumenal side of the membrane. A heparan sulfate N-deacetylase 1 region spans residues 40–594 (GWKRGLEPSG…KRHKDIWSKE (555 aa)). Residues N231, N347, and N397 are each glycosylated (N-linked (GlcNAc...) asparagine). Positions 595 to 878 (KTCDRFPKLL…WLREELQNTR (284 aa)) are heparan sulfate N-sulfotransferase 1. The active-site For sulfotransferase activity is the K610. 610-614 (KTGTT) provides a ligand contact to adenosine 3',5'-bisphosphate. An N-linked (GlcNAc...) asparagine glycan is attached at N663. S708 and W813 together coordinate adenosine 3',5'-bisphosphate. A disulfide bridge links C814 with C824. 829–833 (KGRKY) contacts adenosine 3',5'-bisphosphate.

The protein belongs to the sulfotransferase 1 family. NDST subfamily. In terms of assembly, monomer.

The protein localises to the golgi apparatus membrane. It localises to the golgi apparatus. It is found in the trans-Golgi network membrane. It catalyses the reaction alpha-D-glucosaminyl-[heparan sulfate](n) + 3'-phosphoadenylyl sulfate = N-sulfo-alpha-D-glucosaminyl-[heparan sulfate](n) + adenosine 3',5'-bisphosphate + 2 H(+). The protein operates within glycan metabolism; heparan sulfate biosynthesis. It functions in the pathway glycan metabolism; heparin biosynthesis. Functionally, essential bifunctional enzyme that catalyzes both the N-deacetylation and the N-sulfation of glucosamine (GlcNAc) of the glycosaminoglycan in heparan sulfate. Modifies the GlcNAc-GlcA disaccharide repeating sugar backbone to make N-sulfated heparosan, a prerequisite substrate for later modifications in heparin biosynthesis. Plays a role in determining the extent and pattern of sulfation of heparan sulfate. This chain is Bifunctional heparan sulfate N-deacetylase/N-sulfotransferase 1 (ndst1), found in Xenopus laevis (African clawed frog).